Consider the following 506-residue polypeptide: MTTEDQTISSSGGYVQSSSTTDHVDHHHHDQHESLNPPLVKKKRNLPGNPDPEAEVIALSPKTLMATNRFLCEICGKGFQRDQNLQLHRRGHNLPWKLKQRTSKEVRKRVYVCPEKSCVHHHPTRALGDLTGIKKHFCRKHGEKKWKCEKCAKRYAVQSDWKAHSKTCGTREYRCDCGTIFSRRDSFITHRAFCDALAEETARLNAASHLKSFAATAGSNLNYHYLMGTLIPSPSLPQPPSFPFGPPQPQHHHHHQFPITTNNFDHQDVMKPASTLSLWSGGNINHHQQVTIEDRMAPQPHSPQEDYNWVFGNANNHGELITTSDSLITHDNNINIVQSKENANGATSLSVPSLFSSVDQITQDANAASVAVANMSATALLQKAAQMGATSSTSPTTTITTDQSAYLQSFASKSNQIVEDGGSDRFFASFGSNSVELMSNNNNGLHEIGNPRNGVTVVSGMGELQNYPWKRRRVDIGNAGGGGQTRDFLGVGVQTICHSSSINGWI.

The segment at 1–53 is disordered; that stretch reads MTTEDQTISSSGGYVQSSSTTDHVDHHHHDQHESLNPPLVKKKRNLPGNPDPE. The span at 9 to 21 shows a compositional bias: low complexity; that stretch reads SSSGGYVQSSSTT. Residues 22-33 are compositionally biased toward basic and acidic residues; that stretch reads DHVDHHHHDQHE. Serine 60 is modified (phosphoserine). 2 C2H2-type zinc fingers span residues 70–92 and 111–141; these read FLCE…RRGH and YVCP…CRKH. A Nuclear localization signal motif is present at residues 133 to 140; that stretch reads IKKHFCRK. The C2H2-type 2; degenerate zinc finger occupies 146-169; it reads WKCEKCAKRYAVQSDWKAHSKTCG. The Zn(2+) site is built by cysteine 148, cysteine 151, histidine 164, cysteine 168, cysteine 175, cysteine 177, histidine 190, and cysteine 194. A CCHC-type 2; atypical zinc finger spans residues 173-196; that stretch reads YRCDCGTIFSRRDSFITHRAFCDA. The interval 183-195 is SHR-binding; that stretch reads RRDSFITHRAFCD.

In terms of assembly, interacts with SHR, SCR and JKD, but not with itself. Interacts with SIEL. Binds to RGA and SCL3 competitively in the nucleus. Expressed in the ground tissue and stele cells of embryos and 2-days post-germination roots but not in the quiescent center. Detected only in cells that perform asymmetric cell divisions. In roots, present in cortex, endodermis, and pericycle layer.

It is found in the nucleus. Transcription factor that regulates tissue boundaries and asymmetric cell division. Contributes to the sequestration of 'SHORT-ROOT' to the nucleus. Interacts with the SCR and MGP promoters. Does not show transcription activity by itself, but regulates the transcription of downstream genes through interaction with other transcription factors. Binds DNA via its zinc fingers. Recognizes and binds to SCL3 promoter sequence 5'-AGACAA-3' to promote its expression when in complex with RGA. Positively involved in gibberellic acid (GA) signaling. The sequence is that of Zinc finger protein MAGPIE from Arabidopsis thaliana (Mouse-ear cress).